Consider the following 108-residue polypeptide: MLLFCPGCGNGLIVEEGQRCHRFACNTCPYVHNVTRKVTNRKYPKLKEVDDELGGAAAWENVDSTAEPCPKCEHPRAYFMQLQTRYADEPMTTFYKCCNAQCGHRWRD.

Zn(2+) contacts are provided by Cys5, Cys8, Cys25, Cys28, Cys69, and Cys72. A C4-type zinc finger spans residues 5–28; sequence CPGCGNGLIVEEGQRCHRFACNTC. A TFIIS-type zinc finger spans residues 65-107; the sequence is TAEPCPKCEHPRAYFMQLQTRYADEPMTTFYKCCNAQCGHRWR. The short motif at 88 to 89 is the Hairpin element; sequence DE. The Zn(2+) site is built by Cys98 and Cys102.

Belongs to the archaeal RpoM/eukaryotic RPA12/RPB9/RPC11 RNA polymerase family. Component of the RNA polymerase III complex consisting of 17 subunits: a ten-subunit horseshoe-shaped catalytic core composed of POLR3A/RPC1, POLR3B/RPC2, POLR1C/RPAC1, POLR1D/RPAC2, POLR3K/RPC10, POLR2E/RPABC1, POLR2F/RPABC2, POLR2H/RPABC3, POLR2K/RPABC4 and POLR2L/RPABC5; a mobile stalk composed of two subunits POLR3H/RPC8 and CRCP/RPC9, protruding from the core and functioning primarily in transcription initiation; and additional subunits homologous to general transcription factors of the RNA polymerase II machinery, POLR3C/RPC3-POLR3F/RPC6-POLR3G/RPC7 heterotrimer required for transcription initiation and POLR3D/RPC4-POLR3E/RPC5 heterodimer involved in both transcription initiation and termination.

Its subcellular location is the nucleus. Its function is as follows. Core component of RNA polymerase III (Pol III) which synthesizes small non-coding RNAs using the four ribonucleoside triphosphates as substrates. Can mediate Pol I proofreading of the nascent RNA transcript. Anchors into the Pol III active site to constantly monitor transcription fidelity, cleaves mis-incorporated 5'-ribonucleotides and restarts the transcription process. Once Pol III reaches the poly(dT) termination signal, can induce Pol III clamp opening and transcription termination. Pol III plays an important role in sensing and limiting infection by intracellular bacteria and DNA viruses. Acts as a nuclear and cytosolic DNA sensor involved in innate immune response. Can sense non-self dsDNA that serves as template for transcription into dsRNA. The non-self RNA polymerase III transcripts, such as Epstein-Barr virus-encoded RNAs (EBERs) induce type I interferon and NF-kappa-B through the RIG-I pathway. The chain is DNA-directed RNA polymerase III subunit RPC10 (POLR3K) from Bos taurus (Bovine).